The primary structure comprises 155 residues: SsrA-binding protein (155 aa).

The protein belongs to the SmpB family.

It localises to the cytoplasm. In terms of biological role, required for rescue of stalled ribosomes mediated by trans-translation. Binds to transfer-messenger RNA (tmRNA), required for stable association of tmRNA with ribosomes. tmRNA and SmpB together mimic tRNA shape, replacing the anticodon stem-loop with SmpB. tmRNA is encoded by the ssrA gene; the 2 termini fold to resemble tRNA(Ala) and it encodes a 'tag peptide', a short internal open reading frame. During trans-translation Ala-aminoacylated tmRNA acts like a tRNA, entering the A-site of stalled ribosomes, displacing the stalled mRNA. The ribosome then switches to translate the ORF on the tmRNA; the nascent peptide is terminated with the 'tag peptide' encoded by the tmRNA and targeted for degradation. The ribosome is freed to recommence translation, which seems to be the essential function of trans-translation. The protein is SsrA-binding protein of Lawsonia intracellularis (strain PHE/MN1-00).